The following is a 325-amino-acid chain: Probable tRNA pseudouridine synthase B (325 aa).

The Nucleophile role is filled by aspartate 69. One can recognise a PUA domain in the interval 236–311 (LPKIVIKDSA…IAADIQRVMM (76 aa)).

Belongs to the pseudouridine synthase TruB family. Type 2 subfamily.

The catalysed reaction is uridine(55) in tRNA = pseudouridine(55) in tRNA. In terms of biological role, could be responsible for synthesis of pseudouridine from uracil-55 in the psi GC loop of transfer RNAs. This chain is Probable tRNA pseudouridine synthase B, found in Archaeoglobus fulgidus (strain ATCC 49558 / DSM 4304 / JCM 9628 / NBRC 100126 / VC-16).